Consider the following 219-residue polypeptide: 7-cyano-7-deazaguanine synthase (219 aa).

10–20 (FSGGQDSTTCL) contacts ATP. Positions 186, 195, 198, and 201 each coordinate Zn(2+).

Belongs to the QueC family. As to quaternary structure, homodimer. Requires Zn(2+) as cofactor.

The catalysed reaction is 7-carboxy-7-deazaguanine + NH4(+) + ATP = 7-cyano-7-deazaguanine + ADP + phosphate + H2O + H(+). Its pathway is purine metabolism; 7-cyano-7-deazaguanine biosynthesis. In terms of biological role, catalyzes the ATP-dependent conversion of 7-carboxy-7-deazaguanine (CDG) to 7-cyano-7-deazaguanine (preQ(0)). This is 7-cyano-7-deazaguanine synthase from Bacillus velezensis (strain DSM 23117 / BGSC 10A6 / LMG 26770 / FZB42) (Bacillus amyloliquefaciens subsp. plantarum).